The sequence spans 242 residues: Small ribosomal subunit protein eS4 (242 aa).

One can recognise an S4 RNA-binding domain in the interval 43 to 106 (LPLMIIVRDI…GDVYRVLPDE (64 aa)).

The protein belongs to the eukaryotic ribosomal protein eS4 family.

The chain is Small ribosomal subunit protein eS4 (rps4e) from Methanothermobacter thermautotrophicus (strain ATCC 29096 / DSM 1053 / JCM 10044 / NBRC 100330 / Delta H) (Methanobacterium thermoautotrophicum).